The sequence spans 143 residues: MSIIKEFKEFAVKGNVMDLAIGVIIGGAFSKIVDSVVKDLIMPVIGVLTGGLDFSNKFVLLGQIPASFKGNPESFKDLQAAGVATFGYGSFITVLINFIILAFIIFLMVKFINKLRKPEEAAPAATPEDVLLLREIRDSLKQR.

The next 2 helical transmembrane spans lie at 10–30 (FAVK…GAFS) and 89–109 (GSFI…FLMV).

Belongs to the MscL family. Homopentamer.

Its subcellular location is the cell inner membrane. In terms of biological role, channel that opens in response to stretch forces in the membrane lipid bilayer. May participate in the regulation of osmotic pressure changes within the cell. The sequence is that of Large-conductance mechanosensitive channel from Burkholderia pseudomallei (strain 668).